A 400-amino-acid polypeptide reads, in one-letter code: Argininosuccinate synthase (400 aa).

Residues 6–14 (AYSGGLDTS) and Ala33 each bind ATP. Tyr84 and Ser89 together coordinate L-citrulline. ATP is bound at residue Gly114. L-aspartate-binding residues include Thr116, Asn120, and Asp121. An L-citrulline-binding site is contributed by Asn120. Residues Arg124, Ser173, Ser182, Glu258, and Tyr270 each coordinate L-citrulline.

The protein belongs to the argininosuccinate synthase family. Type 1 subfamily. As to quaternary structure, homotetramer.

The protein localises to the cytoplasm. The catalysed reaction is L-citrulline + L-aspartate + ATP = 2-(N(omega)-L-arginino)succinate + AMP + diphosphate + H(+). The protein operates within amino-acid biosynthesis; L-arginine biosynthesis; L-arginine from L-ornithine and carbamoyl phosphate: step 2/3. The sequence is that of Argininosuccinate synthase from Thermus thermophilus (strain ATCC BAA-163 / DSM 7039 / HB27).